Here is a 397-residue protein sequence, read N- to C-terminus: 8-amino-7-oxononanoate synthase (397 aa).

Residue Arg-23 coordinates substrate. 110–111 (GY) provides a ligand contact to pyridoxal 5'-phosphate. His-135 lines the substrate pocket. Ser-181, His-209, and Thr-237 together coordinate pyridoxal 5'-phosphate. Residue Lys-240 is modified to N6-(pyridoxal phosphate)lysine. Thr-354 lines the substrate pocket.

This sequence belongs to the class-II pyridoxal-phosphate-dependent aminotransferase family. BioF subfamily. Homodimer. Requires pyridoxal 5'-phosphate as cofactor.

It carries out the reaction 6-carboxyhexanoyl-[ACP] + L-alanine + H(+) = (8S)-8-amino-7-oxononanoate + holo-[ACP] + CO2. It functions in the pathway cofactor biosynthesis; biotin biosynthesis. In terms of biological role, catalyzes the decarboxylative condensation of pimeloyl-[acyl-carrier protein] and L-alanine to produce 8-amino-7-oxononanoate (AON), [acyl-carrier protein], and carbon dioxide. The polypeptide is 8-amino-7-oxononanoate synthase (Anaeromyxobacter sp. (strain Fw109-5)).